Reading from the N-terminus, the 451-residue chain is UPF0210 protein CA_C0479 (451 aa).

It belongs to the UPF0210 family. As to quaternary structure, homodimer.

This Clostridium acetobutylicum (strain ATCC 824 / DSM 792 / JCM 1419 / IAM 19013 / LMG 5710 / NBRC 13948 / NRRL B-527 / VKM B-1787 / 2291 / W) protein is UPF0210 protein CA_C0479.